The sequence spans 167 residues: MAEEQQANGAAAENQQQQVQFAIQRIYAKDISFETPSSPAIFRKEWKPDLKLDLNVKHEKIEDGVYEVVLTLTATNKVEDDVAFLCEVHQAGIFTIGEEVQDGQLAHMLGSFCPNILFPYARECVSNLVNRATFPQLNLAPVNFDAIFQRHMQQQAEQAQGQQTADA.

Belongs to the SecB family. Homotetramer, a dimer of dimers. One homotetramer interacts with 1 SecA dimer.

It localises to the cytoplasm. In terms of biological role, one of the proteins required for the normal export of preproteins out of the cell cytoplasm. It is a molecular chaperone that binds to a subset of precursor proteins, maintaining them in a translocation-competent state. It also specifically binds to its receptor SecA. The sequence is that of Protein-export protein SecB from Idiomarina loihiensis (strain ATCC BAA-735 / DSM 15497 / L2-TR).